The primary structure comprises 363 residues: Adenosine 3'-phospho 5'-phosphosulfate transporter 2 (363 aa).

Helical transmembrane passes span 39-59, 63-83, 106-126, 131-151, 157-177, 187-206, 231-251, 257-277, 281-301, and 310-330; these read WLQF…YGYM, IFKL…QFVI, IYGV…ASVG, PTQV…GILI, GWID…FTLA, SRGY…IGNI, VFIF…PFFL, TFGY…VVLT, VFGA…TIIL, and FTIE…LNLY.

It belongs to the nucleotide-sugar transporter family. SLC35B subfamily.

The protein resides in the golgi apparatus membrane. Mediates the transport of adenosine 3'-phospho 5'-phosphosulfate (PAPS), from cytosol into Golgi. PAPS is a universal sulfuryl donor for sulfation events that take place in the Golgi. This is Adenosine 3'-phospho 5'-phosphosulfate transporter 2 (pst-2) from Caenorhabditis briggsae.